The sequence spans 471 residues: 5-hydroxytryptamine receptor 2A (471 aa).

Residues M1 to L80 are Extracellular-facing. N-linked (GlcNAc...) asparagine glycosylation is found at N8, N38, N44, N51, and N54. A helical transmembrane segment spans residues T81–M97. Over A98 to Y111 the chain is Cytoplasmic. The helical transmembrane segment at F112–Y137 threads the bilayer. At G138–K146 the chain is on the extracellular side. A helical transmembrane segment spans residues L147–L171. C148 and C227 are disulfide-bonded. D155 serves as a coordination point for serotonin. Positions D172 to Y174 match the DRY motif; important for ligand-induced conformation changes motif. Residues D172 to K191 lie on the Cytoplasmic side of the membrane. A helical membrane pass occupies residues A192 to L215. Over Q216–D232 the chain is Extracellular. The chain crosses the membrane as a helical span at residues N233 to I258. Residues K259–C322 are Cytoplasmic-facing. Residue S280 is modified to Phosphoserine. The chain crosses the membrane as a helical span at residues K323–I348. N343 lines the serotonin pocket. C349 and C353 form a disulfide bridge. Over C349–N356 the chain is Extracellular. A helical membrane pass occupies residues V357–L382. Residues N376–Y380 carry the NPxxY motif; important for ligand-induced conformation changes and signaling motif. Over F383–V471 the chain is Cytoplasmic. The PDZ-binding signature appears at S469–V471.

This sequence belongs to the G-protein coupled receptor 1 family. As to quaternary structure, interacts (via C-terminus) with MPDZ and PATJ. May interact (via C-terminus) with MPP3, PRDX6, DLG4, DLG1, CASK, APBA1 and MAGI2. Interacts with GRM2 and DRD2; this may affect signaling. Detected in neurons in brain cortex. Detected in adult intestine, especially in mucosal epithelium, longitudinal and circular layers of muscularis externa and myenteric plexuses. Highly expressed in Paneth cells, and detected at lower levels in enterocytes (at protein level). Detected in neurons in the brain cortex.

It is found in the cell membrane. The protein resides in the cell projection. The protein localises to the dendrite. Its subcellular location is the axon. It localises to the cytoplasmic vesicle. It is found in the membrane. The protein resides in the caveola. The protein localises to the presynapse. With respect to regulation, G-protein coupled receptor activity is regulated by lipids: oleamide increases HTR2A-mediated activity. Its function is as follows. G-protein coupled receptor for 5-hydroxytryptamine (serotonin). Also functions as a receptor for various drugs and psychoactive substances, including mescaline, psilocybin, 1-(2,5-dimethoxy-4-iodophenyl)-2-aminopropane (DOI) and lysergic acid diethylamide (LSD). Ligand binding causes a conformation change that triggers signaling via guanine nucleotide-binding proteins (G proteins) and modulates the activity of downstream effectors. HTR2A is coupled to G(q)/G(11) G alpha proteins and activates phospholipase C-beta, releasing diacylglycerol (DAG) and inositol 1,4,5-trisphosphate (IP3) second messengers that modulate the activity of phosphatidylinositol 3-kinase and promote the release of Ca(2+) ions from intracellular stores, respectively. Beta-arrestin family members inhibit signaling via G proteins and mediate activation of alternative signaling pathways. Affects neural activity, perception, cognition and mood. Plays a role in the regulation of behavior, including responses to anxiogenic situations and psychoactive substances. Plays a role in intestinal smooth muscle contraction, and may play a role in arterial vasoconstriction. The chain is 5-hydroxytryptamine receptor 2A (Htr2a) from Mus musculus (Mouse).